Consider the following 148-residue polypeptide: Caltractin (148 aa).

EF-hand domains lie at 4–39, 40–75, 77–112, and 113–148; these read EQKQ…LGFE, PKKE…KMGE, DSRE…LGEN, and LTDE…TSLF. Ca(2+) contacts are provided by Asp17, Asp19, Ser21, Thr23, Glu28, Asp53, Asp55, Ser57, Thr59, and Glu64. 5 residues coordinate Ca(2+): Asp126, Asp128, Asp130, Glu132, and Glu137.

This sequence belongs to the centrin family. In terms of tissue distribution, ubiquitous.

In terms of biological role, this calcium-binding protein is found in the basal body complexes (the functional homolog of the centrosome in animal cell). In mitotic cells it is specifically associated with the poles of the mitotic spindles at the sites of the duplicated basal body complexes. The protein is Caltractin of Spermatozopsis similis (Green alga).